The primary structure comprises 117 residues: Large ribosomal subunit protein uL23 (117 aa).

Belongs to the universal ribosomal protein uL23 family. Part of the 50S ribosomal subunit. Contacts protein L29, and trigger factor when it is bound to the ribosome.

One of the early assembly proteins it binds 23S rRNA. One of the proteins that surrounds the polypeptide exit tunnel on the outside of the ribosome. Forms the main docking site for trigger factor binding to the ribosome. The polypeptide is Large ribosomal subunit protein uL23 (Ruminiclostridium cellulolyticum (strain ATCC 35319 / DSM 5812 / JCM 6584 / H10) (Clostridium cellulolyticum)).